Reading from the N-terminus, the 343-residue chain is 4-hydroxy-2-oxovalerate aldolase 2 (343 aa).

Residues 8 to 260 enclose the Pyruvate carboxyltransferase domain; the sequence is ITVHDMSLRD…ETGVDVFAIS (253 aa). 16–17 is a substrate binding site; the sequence is RD. Residue Asp17 coordinates Mn(2+). His20 functions as the Proton acceptor in the catalytic mechanism. Residues Ser170 and His199 each coordinate substrate. 2 residues coordinate Mn(2+): His199 and His201. Position 290 (Tyr290) interacts with substrate.

This sequence belongs to the 4-hydroxy-2-oxovalerate aldolase family.

The catalysed reaction is (S)-4-hydroxy-2-oxopentanoate = acetaldehyde + pyruvate. The protein is 4-hydroxy-2-oxovalerate aldolase 2 of Burkholderia lata (strain ATCC 17760 / DSM 23089 / LMG 22485 / NCIMB 9086 / R18194 / 383).